The chain runs to 192 residues: Succinate dehydrogenase cytochrome b560 subunit, mitochondrial (192 aa).

A mitochondrion-targeting transit peptide spans 1–27 (MFGRTLNTFTSRNAPLVRNFDKFIVNN). Topologically, residues 48-83 (YSTQAKKPFTITEKRIDELKTPYQPTSPHLTIYKFP) are mitochondrial matrix. Residues 84–113 (LPAVMSIMHRATGICLALGITGLAGVTLFA) form a helical membrane-spanning segment. Over 114-131 (PHDAIHYIQLLHTQYPAL) the chain is Mitochondrial intermembrane. The helical transmembrane segment at 132 to 156 (VYPAKFAVALPLTYHFCTGVRHIIW) threads the bilayer. H146 serves as a coordination point for heme b. The Mitochondrial matrix segment spans residues 157 to 164 (DETVKGLS). A helical membrane pass occupies residues 165-186 (ISQIESSGKVLLAVVAVLSTIF). Residues 187-189 (TFV) are Mitochondrial intermembrane-facing.

The protein belongs to the cytochrome b560 family. As to quaternary structure, component of complex II composed of four subunits: the flavoprotein (FP) sdha, iron-sulfur protein (IP) sdhb, and a cytochrome b560 composed of sdhc and sdhd. Heme b is required as a cofactor.

It localises to the mitochondrion inner membrane. It functions in the pathway carbohydrate metabolism; tricarboxylic acid cycle. Its function is as follows. Membrane-anchoring subunit of succinate dehydrogenase (SDH) that is involved in complex II of the mitochondrial electron transport chain and is responsible for transferring electrons from succinate to ubiquinone (coenzyme Q). The sequence is that of Succinate dehydrogenase cytochrome b560 subunit, mitochondrial (sdhC) from Dictyostelium discoideum (Social amoeba).